Reading from the N-terminus, the 100-residue chain is Nucleoid-associated protein HPG27_32 (100 aa).

Belongs to the YbaB/EbfC family. In terms of assembly, homodimer.

Its subcellular location is the cytoplasm. It localises to the nucleoid. Functionally, binds to DNA and alters its conformation. May be involved in regulation of gene expression, nucleoid organization and DNA protection. The sequence is that of Nucleoid-associated protein HPG27_32 from Helicobacter pylori (strain G27).